A 1672-amino-acid chain; its full sequence is Probable outer membrane protein PmpB (1672 aa).

The signal sequence occupies residues 1 to 14 (MSSMKWLSATAVFA). Disordered regions lie at residues 69–122 (IPVK…GGAF), 203–263 (NTAE…GSGG), 384–415 (EAQT…AKGG), and 734–765 (STGV…PAPA). Composition is skewed to low complexity over residues 77-88 (DDSSTSTPTTSS), 100-111 (SSSSSPNSGDTS), and 203-234 (NTAE…SKVQ). Composition is skewed to polar residues over residues 235 to 256 (SLFT…QTPS) and 384 to 399 (EAQT…SQSG). Residues 734-744 (STGVATTATTS) are compositionally biased toward low complexity. Positions 1379–1672 (DDAAYNNFWV…MTSCGARMIF (294 aa)) constitute an Autotransporter domain.

The protein belongs to the PMP outer membrane protein family.

It is found in the secreted. It localises to the cell wall. Its subcellular location is the cell outer membrane. The chain is Probable outer membrane protein PmpB (pmpB) from Chlamydia muridarum (strain MoPn / Nigg).